We begin with the raw amino-acid sequence, 186 residues long: ADP-ribosylation factor-like protein 8B (186 aa).

Positions 1-19 (MLALISRLLDWFRSLFWKE) form an intramembrane region, note=Mediates targeting to membranes. GTP is bound by residues 29–35 (QYSGKTT), 71–75 (DIGGQ), and 130–133 (NKRD). Residue lysine 141 forms a Glycyl lysine isopeptide (Lys-Gly) (interchain with G-Cter in ubiquitin) linkage.

Belongs to the small GTPase superfamily. Arf family. Interacts with tubulin. Interacts with BORCS5; recruits ARL8B to lysosomes. Interacts with VPS41; the interaction mediates the recruitment of the HOPS complex to lysosomes. Interacts (GTP-bound form) with PLEKHM2 (via RUN domain); the interaction is required to recruit the motor protein kinesin-1 on lysosomes. Interacts (GTP-bound form) with PLEKHM1 (via RUN domain); the interaction is required for PLEKHM1 localization to lysosomes and for ARL8B function in delivery and degradation of endocytic and autophagic cargo in lysosomes. PLEKHM1 and PLEKHM2 compete for interaction with ARL8B. Interacts (GTP-bound form) with RUFY1; the interaction is required for RUFY1 endosomal location. When GTP-bound, interacts with RUFY3 and RUFY4, but not with RUFY1, nor RUFY2. Ubiquitinated at Lys-141 by RNF167, leading to its degradation.

The protein resides in the late endosome membrane. It is found in the lysosome membrane. The protein localises to the cytoplasm. Its subcellular location is the cytoskeleton. It localises to the spindle. The protein resides in the cell projection. It is found in the axon. The protein localises to the synapse. Its subcellular location is the cytolytic granule membrane. It localises to the early endosome membrane. It catalyses the reaction GTP + H2O = GDP + phosphate + H(+). Functionally, small GTPase which cycles between active GTP-bound and inactive GDP-bound states. In its active state, binds to a variety of effector proteins playing a key role in the regulation of lysosomal positioning which is important for nutrient sensing, natural killer cell-mediated cytotoxicity and antigen presentation. Along with its effectors, orchestrates lysosomal transport and fusion. Localizes specifically to lysosomal membranes and mediates anterograde lysosomal motility by recruiting PLEKHM2, which in turn recruits the motor protein kinesin-1 on lysosomes. Required for lysosomal and cytolytic granule exocytosis. Critical factor involved in NK cell-mediated cytotoxicity. Drives the polarization of cytolytic granules and microtubule-organizing centers (MTOCs) toward the immune synapse between effector NK lymphocytes and target cells. In neurons, mediates the anterograde axonal long-range transport of presynaptic lysosome-related vesicles required for presynaptic biogenesis and synaptic function. Also acts as a regulator of endosome to lysosome trafficking pathways of special significance for host defense. Recruits RUFY1 onto early endosomes regulating endosomes to trans-Golgi network proteins retrieval. Regulates cargo trafficking to lysosomes by binding to PLEKHM1 and recruiting the HOPS subunit VPS41, resulting in functional assembly of the HOPS complex on lysosomal membranes. Plays an important role in cargo delivery to lysosomes for antigen presentation and microbial killing. Directs the intersection of CD1d with lipid antigens in lysosomes, and plays a role in intersecting phagosomes with lysosomes to generate phagolysosomes that kill microbes. Involved in the process of MHC II presentation. Regulates the delivery of antigens to lysosomes and the formation of MHC II-peptide complexes through the recruitment of the HOPS complex to lysosomes allowing the fusion of late endosomes to lysosomes. May play a role in chromosome segregation. The sequence is that of ADP-ribosylation factor-like protein 8B (ARL8B) from Pongo abelii (Sumatran orangutan).